The following is a 166-amino-acid chain: 16S rRNA aminocarboxypropyltransferase (166 aa).

S-adenosyl-L-methionine-binding residues include threonine 17, isoleucine 62, leucine 84, tyrosine 99, and serine 103.

The protein belongs to the TDD superfamily. TSR3 family.

It localises to the cytoplasm. It carries out the reaction an N(1)-methylpseudouridine in rRNA + S-adenosyl-L-methionine = N(1)-methyl-N(3)-[(3S)-3-amino-3-carboxypropyl]pseudouridine in rRNA + S-methyl-5'-thioadenosine + H(+). Aminocarboxypropyltransferase that catalyzes the aminocarboxypropyl transfer on pseudouridine corresponding to position 914 in M.jannaschii 16S rRNA. It constitutes the last step in biosynthesis of the hypermodified N1-methyl-N3-(3-amino-3-carboxypropyl) pseudouridine (m1acp3-Psi). The chain is 16S rRNA aminocarboxypropyltransferase from Saccharolobus islandicus (strain M.16.27) (Sulfolobus islandicus).